Here is a 488-residue protein sequence, read N- to C-terminus: NADH-ubiquinone oxidoreductase chain 2 (488 aa).

14 helical membrane-spanning segments follow: residues 4–24 (LFLA…LLIH), 45–65 (WLGL…APLL), 84–104 (FCQI…FDFF), 111–131 (AFEF…MISA), 134–154 (LIAM…LAAS), 168–188 (YLIL…MIYG), 215–235 (IFMG…AVPF), 252–272 (AFLS…VFIY), 282–302 (IFFF…MAQT), 308–328 (LAYS…CGTI), 334–354 (LLIG…IVLA), 375–395 (ILAI…PLAG), 400–420 (FYLF…VGVV), and 456–476 (LLLA…SPLF).

Belongs to the complex I subunit 2 family.

The protein resides in the mitochondrion inner membrane. It carries out the reaction a ubiquinone + NADH + 5 H(+)(in) = a ubiquinol + NAD(+) + 4 H(+)(out). Its function is as follows. Core subunit of the mitochondrial membrane respiratory chain NADH dehydrogenase (Complex I) that is believed to belong to the minimal assembly required for catalysis. Complex I functions in the transfer of electrons from NADH to the respiratory chain. The immediate electron acceptor for the enzyme is believed to be ubiquinone. In Oenothera berteroana (Bertero's evening primrose), this protein is NADH-ubiquinone oxidoreductase chain 2 (ND2).